Reading from the N-terminus, the 472-residue chain is 3-isopropylmalate dehydratase large subunit (472 aa).

The [4Fe-4S] cluster site is built by C352, C413, and C416.

This sequence belongs to the aconitase/IPM isomerase family. LeuC type 1 subfamily. Heterodimer of LeuC and LeuD. The cofactor is [4Fe-4S] cluster.

It catalyses the reaction (2R,3S)-3-isopropylmalate = (2S)-2-isopropylmalate. It participates in amino-acid biosynthesis; L-leucine biosynthesis; L-leucine from 3-methyl-2-oxobutanoate: step 2/4. In terms of biological role, catalyzes the isomerization between 2-isopropylmalate and 3-isopropylmalate, via the formation of 2-isopropylmaleate. This is 3-isopropylmalate dehydratase large subunit from Laribacter hongkongensis (strain HLHK9).